A 147-amino-acid polypeptide reads, in one-letter code: Catabolic 3-dehydroquinase 2 (147 aa).

The active-site Proton acceptor is tyrosine 23. Asparagine 74, histidine 80, and aspartate 87 together coordinate substrate. The Proton donor role is filled by histidine 100. Substrate is bound by residues 101 to 102 and arginine 111; that span reads IT.

It belongs to the type-II 3-dehydroquinase family. In terms of assembly, homododecamer. Adopts a ring-like structure, composed of an arrangement of two hexameric rings stacked on top of one another.

The catalysed reaction is 3-dehydroquinate = 3-dehydroshikimate + H2O. The protein operates within aromatic compound metabolism; 3,4-dihydroxybenzoate biosynthesis; 3,4-dihydroxybenzoate from 3-dehydroquinate: step 1/2. In terms of biological role, is involved in the catabolism of quinate. Allows the utilization of quinate as carbon source via the beta-ketoadipate pathway. This chain is Catabolic 3-dehydroquinase 2, found in Aspergillus terreus (strain NIH 2624 / FGSC A1156).